The primary structure comprises 215 residues: MOB kinase activator-like 1A (215 aa).

A disordered region spans residues M1–L29. C80, C85, H162, and H167 together coordinate Zn(2+).

It belongs to the MOB1/phocein family. In terms of tissue distribution, isoform 1 is constitutively expressed. Isoform 2 is specifically expressed in flowers bud during sporogenesis and gametogenesis.

Its subcellular location is the cytoplasm. The protein resides in the cytoskeleton. The protein localises to the phragmoplast. This is MOB kinase activator-like 1A from Medicago sativa subsp. falcata (Sickle medic).